Reading from the N-terminus, the 446-residue chain is Probable D-serine dehydratase (446 aa).

K116 is subject to N6-(pyridoxal phosphate)lysine.

Belongs to the serine/threonine dehydratase family. DsdA subfamily. It depends on pyridoxal 5'-phosphate as a cofactor.

It catalyses the reaction D-serine = pyruvate + NH4(+). The protein is Probable D-serine dehydratase of Bacillus thuringiensis (strain Al Hakam).